The chain runs to 344 residues: D-arabinose dehydrogenase [NAD(P)+] heavy chain (344 aa).

The active-site Proton donor is Y71. Residue H131 coordinates substrate. T151 carries the phosphothreonine modification. NADP(+) is bound at residue S241–S295.

It belongs to the aldo/keto reductase family. In terms of assembly, heterodimer of a heavy chain and a light chain.

The protein localises to the cytoplasm. The catalysed reaction is D-arabinose + NADP(+) = D-arabinono-1,4-lactone + NADPH + H(+). The enzyme catalyses D-arabinose + NAD(+) = D-arabinono-1,4-lactone + NADH + H(+). Functionally, catalyzes the oxidation of D-arabinose, L-xylose, L-fucose and L-galactose in the presence of NADP(+). This chain is D-arabinose dehydrogenase [NAD(P)+] heavy chain (ARA1), found in Saccharomyces cerevisiae (strain ATCC 204508 / S288c) (Baker's yeast).